A 3227-amino-acid chain; its full sequence is E3 ubiquitin-protein ligase ptr1 (3227 aa).

Disordered regions lie at residues 1806–1836 (SGAAQDSMGDQSLSSSSEESSDSDREEPPDL), 1869–1894 (MEFEDDQSGSADSVVSEDDADDVMYS), 1908–1929 (QDASSQNDDSSFDEASSHGDVI), and 2577–2607 (ATTGYTNDQDSRGSTVPKQDPGTTASRKDKK). Positions 1811-1823 (DSMGDQSLSSSSE) are enriched in low complexity. Residues 1883–1894 (VSEDDADDVMYS) show a composition bias toward acidic residues. Residues 2577–2601 (ATTGYTNDQDSRGSTVPKQDPGTTA) show a composition bias toward polar residues. The 337-residue stretch at 2891–3227 (DADEVKFSKL…NEGSEGFGFA (337 aa)) folds into the HECT domain. C3194 (glycyl thioester intermediate) is an active-site residue.

The protein belongs to the UPL family. TOM1/PTR1 subfamily.

The protein resides in the nucleus. The enzyme catalyses S-ubiquitinyl-[E2 ubiquitin-conjugating enzyme]-L-cysteine + [acceptor protein]-L-lysine = [E2 ubiquitin-conjugating enzyme]-L-cysteine + N(6)-ubiquitinyl-[acceptor protein]-L-lysine.. It participates in protein modification; protein ubiquitination. Functionally, probable ubiquitin ligase protein involved in mRNA export. E3 ubiquitin ligase proteins mediate ubiquitination and subsequent proteasomal degradation of target proteins. Probably participates in mRNA export from the nucleus by regulating the transport of hnRNP proteins such as rae1. In Schizosaccharomyces pombe (strain 972 / ATCC 24843) (Fission yeast), this protein is E3 ubiquitin-protein ligase ptr1 (ptr1).